Consider the following 99-residue polypeptide: Photosystem II reaction center Psb28 protein (99 aa).

Belongs to the Psb28 family. In terms of assembly, part of the photosystem II complex.

The protein localises to the cell inner membrane. This Gloeobacter violaceus (strain ATCC 29082 / PCC 7421) protein is Photosystem II reaction center Psb28 protein.